Here is a 192-residue protein sequence, read N- to C-terminus: Per os infectivity factor 6 (192 aa).

A helical transmembrane segment spans residues Ile154–Phe174.

The protein resides in the host membrane. It localises to the virion. Its subcellular location is the host cytoplasm. The protein localises to the host nucleus. In terms of biological role, per os infectivity factor. This is Per os infectivity factor 6 (AC68) from Autographa californica nuclear polyhedrosis virus (AcMNPV).